We begin with the raw amino-acid sequence, 636 residues long: Rik1-associated factor 2 (636 aa).

Component of the Clr4 methyltransferase complex (ClrC) composed of at least clr4, rik1, pcu4, rbx1, raf1 and raf2. The cullin pcu4, rik1, raf1, raf2 and the ring-box protein rbx1 are components of an E3 ubiquitin ligase, whose activity is essential for heterochromatin assembly. Interacts with pcu4.

It localises to the cytoplasm. The protein localises to the mitochondrion. Its subcellular location is the nucleus. The protein resides in the chromosome. Functionally, component of the Clr4 methyltransferase complex (ClrC) which contributes to the establishment of heterochromatin by specifically methylating histone H3 to form H3K9me. ClrC preferentially ubiquitylates H3K14 and ClrC-mediated H3 ubiquitination promotes clr4 methyltransferase activity for the methylation of H3K9. H3K9me represents a specific tag for epigenetic transcriptional repression by recruiting swi6/HP1 to methylated histones which leads to transcriptional silencing within centromeric heterochromatin, telomeric regions and at the silent mating-type loci. Has a role in both mitotic and meiotic chromosome segregation. In Schizosaccharomyces pombe (strain 972 / ATCC 24843) (Fission yeast), this protein is Rik1-associated factor 2 (raf2).